Here is a 421-residue protein sequence, read N- to C-terminus: RNA exonuclease 4 (421 aa).

Disordered stretches follow at residues 1-51 (MAKA…ETKK) and 79-179 (ENQA…QPPK). A compositionally biased stretch (polar residues) spans 11–24 (SPCSGSLGKTANTP). Over residues 25 to 36 (KQKRKQKQRKFW) the composition is skewed to basic residues. 3 stretches are compositionally biased toward basic and acidic residues: residues 92–107 (PKKD…EESV), 140–149 (AAEKSDEVSK), and 161–170 (DTEHQGKKPQ). One can recognise an Exonuclease domain in the interval 234 to 385 (TVAMDCEMVG…QDAQAAMRLY (152 aa)).

It belongs to the REXO4 family.

The protein resides in the nucleus. The protein is RNA exonuclease 4 (rexo4) of Xenopus laevis (African clawed frog).